The chain runs to 492 residues: Virion host shutoff protein (492 aa).

Disordered stretches follow at residues 110 to 130, 288 to 307, and 334 to 371; these read EEASDVDASPPPSPITDSRPS, SQARRAARRERANSRSLESM, and EDDYEEDPPLQPPDVAGGPRDGARSSSSEILTPPELVQ.

This sequence belongs to the herpesviridae VHS protein family. In terms of assembly, interacts with human EIF4H, EIF4A1 and EIF4A2; interaction with eIF4AI and EIF4A2 presumably allows Vhs protein to associate with the eIF4F cap-binding complex.

It is found in the virion. Functionally, minor structural protein that acts as an endoribonuclease during lytic infection. Degrades host mRNAs in the cytoplasm by cutting them at preferred sites, including some in regions of translation initiation. Together with inhibition of host splicing by ICP27, contributes to an overall decrease in host protein synthesis. Also, after the onset of viral transcription, accelerates the turnover of viral mRNA, thereby facilitating the sequential expression of different classes of viral genes. Binds translation initiation factors eIF4H, eIF4AI, and eIF4AII, thereby may interact directly with the translation initiation complex and thus digest specifically mRNAs. Also impedes antigen presentation by major histocompatibility complex class I and class II molecules, inhibits secretion of cytokines that would otherwise recruit lymphocytes and neutrophils cells to the site of infection and blocks the activation of dendritic cells. Impedes the alpha/beta interferon-mediated response to infection. Inhibits the integrated stress response (ISR) in the infected cell, this function requires the endonuclease activity. Stress granule formation is thus inhibited, which allows protein synthesis and viral replication. In Homo sapiens (Human), this protein is Virion host shutoff protein (UL41).